A 396-amino-acid polypeptide reads, in one-letter code: Pyruvate dehydrogenase E1 component subunit alpha type I, mitochondrial (396 aa).

A mitochondrion-targeting transit peptide spans 1–25; that stretch reads MIFVFANIFKVPTVSPSVMAISVRL. The pyruvate site is built by His-88, Tyr-114, Arg-115, Gly-153, Gly-161, Val-163, Asp-192, Gly-193, Ala-194, Asn-221, and Tyr-223. 2 residues coordinate thiamine diphosphate: Tyr-114 and Arg-115. Thiamine diphosphate is bound by residues Gly-161, Val-163, Asp-192, Gly-193, Ala-194, and Asn-221. Asp-192 provides a ligand contact to Mg(2+). Residues Asn-221 and Tyr-223 each coordinate Mg(2+). Position 288 (His-288) interacts with thiamine diphosphate. Residues Ser-289 and Ser-296 each carry the phosphoserine modification.

In terms of assembly, heterotetramer of two PDHA1 and two PDHB subunits. The heterotetramer interacts with DLAT, and is part of the multimeric pyruvate dehydrogenase complex that contains multiple copies of pyruvate dehydrogenase (E1), dihydrolipoamide acetyltransferase (DLAT, E2) and lipoamide dehydrogenase (DLD, E3). Requires thiamine diphosphate as cofactor. The cofactor is Mg(2+).

The protein resides in the mitochondrion matrix. The enzyme catalyses N(6)-[(R)-lipoyl]-L-lysyl-[protein] + pyruvate + H(+) = N(6)-[(R)-S(8)-acetyldihydrolipoyl]-L-lysyl-[protein] + CO2. Its activity is regulated as follows. Pyruvate dehydrogenase activity is inhibited by phosphorylation of PDHA1; it is reactivated by dephosphorylation. Its function is as follows. The pyruvate dehydrogenase complex catalyzes the overall conversion of pyruvate to acetyl-CoA and CO(2), and thereby links the glycolytic pathway to the tricarboxylic cycle. This chain is Pyruvate dehydrogenase E1 component subunit alpha type I, mitochondrial, found in Ascaris suum (Pig roundworm).